Consider the following 471-residue polypeptide: Reticulon-2 (471 aa).

Disordered stretches follow at residues 1–137, 153–181, and 205–234; these read MGQV…ERPL, SAGSGEDSATSSSTPLENEEPDGLEASEA, and QLSPSSGTPQAHTPSPQRSQDSNSGPDDEP. Low complexity predominate over residues 14–25; it reads APSTASSTPDST. Basic and acidic residues predominate over residues 32 to 43; sequence SDFRELHTAREF. Ser-44 bears the Phosphoserine mark. Polar residues-rich tracts occupy residues 100–118 and 159–168; these read PQQSGLGDSLESIPSLSQS and DSATSSSTPL. The span at 169-181 shows a compositional bias: acidic residues; sequence ENEEPDGLEASEA. Polar residues predominate over residues 205 to 229; the sequence is QLSPSSGTPQAHTPSPQRSQDSNSG. Ser-226 and Ser-228 each carry phosphoserine. The Reticulon domain maps to 272–471; the sequence is VADLLYWKDT…SVSGSKAKAE (200 aa). Transmembrane regions (helical) follow at residues 295-315 and 390-410; these read LLCLLHFSIVSVAAHLALLGL and LLFYILTFVGAIFNGLTLVIL.

In terms of assembly, interacts with SPAST. Interacts with BACE1. Interacts (via first transmembrane domain) with ARL6IP5/GTRAP3-18. Interacts (via N-terminus) with SLC1A1/EAAC1; the interaction promotes cell surface expression of SLC1A1. In terms of tissue distribution, detected in skeletal and cardiac muscle (at protein level). Expressed predominantly in neural and muscular tissues.

The protein resides in the endoplasmic reticulum membrane. It localises to the sarcoplasmic reticulum membrane. It is found in the cell membrane. Its subcellular location is the sarcolemma. The protein localises to the T-tubule. The protein resides in the cytoplasm. It localises to the myofibril. It is found in the sarcomere. Its subcellular location is the z line. The protein localises to the cytoskeleton. Functionally, inhibits amyloid precursor protein processing, probably by blocking BACE1 activity. Enhances trafficking of the glutamate transporter SLC1A1/EAAC1 from the endoplasmic reticulum to the cell surface. Plays a role in the translocation of SLC2A4/GLUT4 from intracellular membranes to the cell membrane which facilitates the uptake of glucose into the cell. This chain is Reticulon-2, found in Mus musculus (Mouse).